A 192-amino-acid polypeptide reads, in one-letter code: UPF0149 protein Spro_3920 (192 aa).

It belongs to the UPF0149 family.

The protein is UPF0149 protein Spro_3920 of Serratia proteamaculans (strain 568).